Here is a 554-residue protein sequence, read N- to C-terminus: Glucose-6-phosphate isomerase (554 aa).

Catalysis depends on Glu359, which acts as the Proton donor. Catalysis depends on residues His390 and Lys518.

It belongs to the GPI family.

The protein resides in the cytoplasm. It carries out the reaction alpha-D-glucose 6-phosphate = beta-D-fructose 6-phosphate. Its pathway is carbohydrate biosynthesis; gluconeogenesis. It functions in the pathway carbohydrate degradation; glycolysis; D-glyceraldehyde 3-phosphate and glycerone phosphate from D-glucose: step 2/4. Catalyzes the reversible isomerization of glucose-6-phosphate to fructose-6-phosphate. The protein is Glucose-6-phosphate isomerase of Pseudomonas putida (strain GB-1).